The chain runs to 439 residues: AP-2 complex subunit mu (439 aa).

In terms of domain architecture, MHD spans 172–438 (RNELYIDVVE…LTKAGTYQNR (267 aa)).

The protein belongs to the adaptor complexes medium subunit family. In terms of assembly, adaptor protein complex 2 (AP-2) is a heterotetramer composed of two large adaptins (alpha-type and beta-type subunits), a medium adaptin (mu-type subunit AP50) and a small adaptin (sigma-type subunit AP17). Post-translationally, phosphorylated.

The protein localises to the cell membrane. Its subcellular location is the membrane. It is found in the coated pit. Functionally, component of the adaptor complexes which link clathrin to receptors in coated vesicles. Clathrin-associated protein complexes are believed to interact with the cytoplasmic tails of membrane proteins, leading to their selection and concentration. AP50 is a subunit of the plasma membrane adaptor. This is AP-2 complex subunit mu (apm2) from Dictyostelium discoideum (Social amoeba).